We begin with the raw amino-acid sequence, 279 residues long: Tryptophan 2,3-dioxygenase (279 aa).

Residues 48 to 52, tyrosine 110, and arginine 114 contribute to the substrate site; that span reads FIVIH. Residue histidine 237 coordinates heme. Threonine 251 lines the substrate pocket.

Belongs to the tryptophan 2,3-dioxygenase family. In terms of assembly, homotetramer. It depends on heme as a cofactor.

The catalysed reaction is L-tryptophan + O2 = N-formyl-L-kynurenine. Its pathway is amino-acid degradation; L-tryptophan degradation via kynurenine pathway; L-kynurenine from L-tryptophan: step 1/2. In terms of biological role, heme-dependent dioxygenase that catalyzes the oxidative cleavage of the L-tryptophan (L-Trp) pyrrole ring and converts L-tryptophan to N-formyl-L-kynurenine. Catalyzes the oxidative cleavage of the indole moiety. This Exiguobacterium sibiricum (strain DSM 17290 / CCUG 55495 / CIP 109462 / JCM 13490 / 255-15) protein is Tryptophan 2,3-dioxygenase.